Consider the following 221-residue polypeptide: Deoxyribose-phosphate aldolase (221 aa).

Asp96 acts as the Proton donor/acceptor in catalysis. Lys157 serves as the catalytic Schiff-base intermediate with acetaldehyde. Catalysis depends on Lys185, which acts as the Proton donor/acceptor.

Belongs to the DeoC/FbaB aldolase family. DeoC type 1 subfamily.

Its subcellular location is the cytoplasm. The catalysed reaction is 2-deoxy-D-ribose 5-phosphate = D-glyceraldehyde 3-phosphate + acetaldehyde. It functions in the pathway carbohydrate degradation; 2-deoxy-D-ribose 1-phosphate degradation; D-glyceraldehyde 3-phosphate and acetaldehyde from 2-deoxy-alpha-D-ribose 1-phosphate: step 2/2. Functionally, catalyzes a reversible aldol reaction between acetaldehyde and D-glyceraldehyde 3-phosphate to generate 2-deoxy-D-ribose 5-phosphate. In Crocosphaera subtropica (strain ATCC 51142 / BH68) (Cyanothece sp. (strain ATCC 51142)), this protein is Deoxyribose-phosphate aldolase.